The sequence spans 201 residues: uncharacterized protein (201 aa).

In terms of biological role, may have a role in tissue tropism within the insect larvae. This is an uncharacterized protein from Lepidoptera (butterflies and moths).